A 338-amino-acid chain; its full sequence is MIVLGIESSCDETAAAVVRDGRVLLSNVIASQIGEHSKYGGVVPEIASRKHIEAVIPVILQALHDAGMELSDIEGIAVTRGPGLVGSLLVGLSVAKALAFSRKLPLVGIHHLEGHIAAIFLSEKVPEFPFIALVVSGGHTNIYFVRGFGLFTLLGQTRDDAAGEAFDKAAKLLNIGYPGGVVIDRLAKEGDRNLLNFPRAMKESLDFSFSGLKTSLLVHVKKHGSPSAREDLAHLVAAYQEAIVDVLVEKTLKAAKMNSVPQVVVCGGVASNSRLREHFMERSREENIDLFIPPPVLCTDNAAMIAVVGENLLNKGKSEELSINAVSRWPLDVAGSFR.

The Fe cation site is built by H111 and H115. Residues 134–138 (VVSGG), D167, G180, D184, and N272 each bind substrate. D300 provides a ligand contact to Fe cation.

This sequence belongs to the KAE1 / TsaD family. Fe(2+) is required as a cofactor.

It is found in the cytoplasm. It catalyses the reaction L-threonylcarbamoyladenylate + adenosine(37) in tRNA = N(6)-L-threonylcarbamoyladenosine(37) in tRNA + AMP + H(+). Functionally, required for the formation of a threonylcarbamoyl group on adenosine at position 37 (t(6)A37) in tRNAs that read codons beginning with adenine. Is involved in the transfer of the threonylcarbamoyl moiety of threonylcarbamoyl-AMP (TC-AMP) to the N6 group of A37, together with TsaE and TsaB. TsaD likely plays a direct catalytic role in this reaction. This is tRNA N6-adenosine threonylcarbamoyltransferase from Syntrophus aciditrophicus (strain SB).